The sequence spans 444 residues: Tubulin beta-4A chain (444 aa).

Residues 1-4 (MREI) carry the MREI motif motif. The GTP site is built by Gln-11, Glu-69, Ser-138, Gly-142, Thr-143, and Gly-144. Glu-69 is a Mg(2+) binding site. Ser-172 carries the post-translational modification Phosphoserine; by CDK1. Asn-204 and Asn-226 together coordinate GTP. 5-glutamyl polyglutamate is present on Glu-436.

It belongs to the tubulin family. As to quaternary structure, dimer of alpha and beta chains. A typical microtubule is a hollow water-filled tube with an outer diameter of 25 nm and an inner diameter of 15 nM. Alpha-beta heterodimers associate head-to-tail to form protofilaments running lengthwise along the microtubule wall with the beta-tubulin subunit facing the microtubule plus end conferring a structural polarity. Microtubules usually have 13 protofilaments but different protofilament numbers can be found in some organisms and specialized cells. The cofactor is Mg(2+). In terms of processing, some glutamate residues at the C-terminus are polyglycylated, resulting in polyglycine chains on the gamma-carboxyl group. Glycylation is mainly limited to tubulin incorporated into axonemes (cilia and flagella) whereas glutamylation is prevalent in neuronal cells, centrioles, axonemes, and the mitotic spindle. Both modifications can coexist on the same protein on adjacent residues, and lowering polyglycylation levels increases polyglutamylation, and reciprocally. Cilia and flagella glycylation is required for their stability and maintenance. Flagella glycylation controls sperm motility. Post-translationally, some glutamate residues at the C-terminus are polyglutamylated, resulting in polyglutamate chains on the gamma-carboxyl group. Polyglutamylation plays a key role in microtubule severing by spastin (SPAST). SPAST preferentially recognizes and acts on microtubules decorated with short polyglutamate tails: severing activity by SPAST increases as the number of glutamates per tubulin rises from one to eight, but decreases beyond this glutamylation threshold. Glutamylation is also involved in cilia motility. Phosphorylated on Ser-172 by CDK1 during the cell cycle, from metaphase to telophase, but not in interphase. This phosphorylation inhibits tubulin incorporation into microtubules.

The protein resides in the cytoplasm. The protein localises to the cytoskeleton. Its function is as follows. Tubulin is the major constituent of microtubules, a cylinder consisting of laterally associated linear protofilaments composed of alpha- and beta-tubulin heterodimers. Microtubules grow by the addition of GTP-tubulin dimers to the microtubule end, where a stabilizing cap forms. Below the cap, tubulin dimers are in GDP-bound state, owing to GTPase activity of alpha-tubulin. The polypeptide is Tubulin beta-4A chain (TUBB4A) (Bos taurus (Bovine)).